Consider the following 506-residue polypeptide: UDP-N-acetylglucosamine--peptide N-acetylglucosaminyltransferase GtfA subunit (506 aa).

An N-terminus R-fold-1 region spans residues 1-78 (MTVYNINLGI…FTDIKIAPTT (78 aa)). 16–19 (GVEY) lines the UDP pocket. Positions 79-195 (VTLDQVLAQV…LYRFPDRIFY (117 aa)) are extended beta-sheet domain. The C-terminus R-fold-1 stretch occupies residues 196 to 306 (SKAELVRYFL…QPQIATIPVG (111 aa)). His242 contacts N-acetyl-D-glucosamine. The interval 307 to 506 (SLDQLTYPKE…LKEVRDDSAL (200 aa)) is R-fold-2. UDP contacts are provided by residues Arg328, Tyr357, and 383–385 (GHA). 405–407 (GFG) provides a ligand contact to N-acetyl-D-glucosamine. Thr409 lines the UDP pocket.

The protein belongs to the glycosyltransferase group 1 family. Glycosyltransferase 4 subfamily. As to quaternary structure, forms a heterotetramer with 2 subunits each of GtfA and GtfB. Part of the accessory SecA2/SecY2 protein translocation apparatus required to export cell wall protein GspB.

The protein resides in the cytoplasm. The protein localises to the cell membrane. It catalyses the reaction L-seryl-[protein] + UDP-N-acetyl-alpha-D-glucosamine = 3-O-[N-acetyl-alpha-D-glucosaminyl]-L-seryl-[protein] + UDP + H(+). It functions in the pathway protein modification; protein glycosylation. Its function is as follows. Required for polymorphic O-glycosylation of GspB, a serine-rich repeat cell wall protein encoded upstream in the same operon. Catalyzes the first step in glycosylation by transferring N-acetylglucosamine from UDP-GlcNAc to serine residues in GspB. Part of the accessory SecA2/SecY2 system specifically required to export GspB. Upon coexpression in E.coli with GtfB glycosylates GspB constructs. Glycosylation probably occurs intracellularly. Requires GtfB for glycosylation activity, it has no activity alone. Does not use UDP-glucose as substrate. Has a fast, probably processive glycosylation phase followed by a slower, non-processive phase. The enzyme probably modifies its tertiary conformation by opening and closing its intersubunit interfaces to accomodate the increasingly glycosylated substrate; protein substrate recognition is provided by GtfB. The protein is UDP-N-acetylglucosamine--peptide N-acetylglucosaminyltransferase GtfA subunit of Streptococcus gordonii.